The chain runs to 350 residues: Ion-translocating oxidoreductase complex subunit D (350 aa).

Helical transmembrane passes span 36–56 (FYFF…IALL), 68–88 (PIIS…IGVS), 89–109 (IPSI…IVIV), and 120–140 (IFNP…VQMT). The residue at position 185 (Thr-185) is an FMN phosphoryl threonine. A run of 5 helical transmembrane segments spans residues 212–232 (GFGV…LAML), 239–259 (WQIS…GYLL), 265–285 (IGPL…FIAT), 291–311 (ATSV…VYVI), and 315–335 (GGYP…APFI).

This sequence belongs to the NqrB/RnfD family. In terms of assembly, the complex is composed of six subunits: RnfA, RnfB, RnfC, RnfD, RnfE and RnfG. FMN serves as cofactor.

It is found in the cell inner membrane. Part of a membrane-bound complex that couples electron transfer with translocation of ions across the membrane. This is Ion-translocating oxidoreductase complex subunit D from Shewanella piezotolerans (strain WP3 / JCM 13877).